The chain runs to 169 residues: Crossover junction endodeoxyribonuclease RuvC (169 aa).

Active-site residues include D11, E71, and D143. 3 residues coordinate Mg(2+): D11, E71, and D143.

Belongs to the RuvC family. In terms of assembly, homodimer which binds Holliday junction (HJ) DNA. The HJ becomes 2-fold symmetrical on binding to RuvC with unstacked arms; it has a different conformation from HJ DNA in complex with RuvA. In the full resolvosome a probable DNA-RuvA(4)-RuvB(12)-RuvC(2) complex forms which resolves the HJ. Mg(2+) serves as cofactor.

The protein resides in the cytoplasm. The catalysed reaction is Endonucleolytic cleavage at a junction such as a reciprocal single-stranded crossover between two homologous DNA duplexes (Holliday junction).. Its function is as follows. The RuvA-RuvB-RuvC complex processes Holliday junction (HJ) DNA during genetic recombination and DNA repair. Endonuclease that resolves HJ intermediates. Cleaves cruciform DNA by making single-stranded nicks across the HJ at symmetrical positions within the homologous arms, yielding a 5'-phosphate and a 3'-hydroxyl group; requires a central core of homology in the junction. The consensus cleavage sequence is 5'-(A/T)TT(C/G)-3'. Cleavage occurs on the 3'-side of the TT dinucleotide at the point of strand exchange. HJ branch migration catalyzed by RuvA-RuvB allows RuvC to scan DNA until it finds its consensus sequence, where it cleaves and resolves the cruciform DNA. The protein is Crossover junction endodeoxyribonuclease RuvC of Bartonella quintana (strain Toulouse) (Rochalimaea quintana).